The following is a 140-amino-acid chain: Nucleoside diphosphate kinase (140 aa).

Residues Lys9, Phe57, Arg85, Thr91, Arg102, and Asn112 each contribute to the ATP site. The active-site Pros-phosphohistidine intermediate is the His115.

This sequence belongs to the NDK family. In terms of assembly, homotetramer. The cofactor is Mg(2+).

It is found in the cytoplasm. It carries out the reaction a 2'-deoxyribonucleoside 5'-diphosphate + ATP = a 2'-deoxyribonucleoside 5'-triphosphate + ADP. It catalyses the reaction a ribonucleoside 5'-diphosphate + ATP = a ribonucleoside 5'-triphosphate + ADP. Major role in the synthesis of nucleoside triphosphates other than ATP. The ATP gamma phosphate is transferred to the NDP beta phosphate via a ping-pong mechanism, using a phosphorylated active-site intermediate. In Chlorobium limicola (strain DSM 245 / NBRC 103803 / 6330), this protein is Nucleoside diphosphate kinase.